A 511-amino-acid polypeptide reads, in one-letter code: Glucans biosynthesis protein G (511 aa).

Residues 1 to 22 form the signal peptide; sequence MMKMRWLSAAVMLTLYTSSSWA.

It belongs to the OpgD/OpgG family.

Its subcellular location is the periplasm. Its pathway is glycan metabolism; osmoregulated periplasmic glucan (OPG) biosynthesis. Functionally, involved in the biosynthesis of osmoregulated periplasmic glucans (OPGs). The sequence is that of Glucans biosynthesis protein G from Escherichia coli O81 (strain ED1a).